The chain runs to 49 residues: Osteocalcin (49 aa).

Residues 1 to 47 (YLDHGLGAPAPYPDPLEPKREVCELNPDCDELADHIGFQEAYRRFYG) form the Gla domain. P9 is modified (hydroxyproline). The Ca(2+) site is built by E17, E21, E24, and D30. 4-carboxyglutamate is present on residues E17, E21, and E24. A disulfide bond links C23 and C29.

This sequence belongs to the osteocalcin/matrix Gla protein family. Post-translationally, gamma-carboxyglutamic acid residues are formed by vitamin K dependent carboxylation. These residues are essential for the binding of calcium.

The protein localises to the secreted. The carboxylated form is one of the main organic components of the bone matrix, which constitutes 1-2% of the total bone protein: it acts as a negative regulator of bone formation and is required to limit bone formation without impairing bone resorption or mineralization. The carboxylated form binds strongly to apatite and calcium. Its function is as follows. The uncarboxylated form acts as a hormone secreted by osteoblasts, which regulates different cellular processes, such as energy metabolism, male fertility and brain development. Regulates of energy metabolism by acting as a hormone favoring pancreatic beta-cell proliferation, insulin secretion and sensitivity and energy expenditure. Uncarboxylated osteocalcin hormone also promotes testosterone production in the testes: acts as a ligand for G protein-coupled receptor GPRC6A at the surface of Leydig cells, initiating a signaling response that promotes the expression of enzymes required for testosterone synthesis in a CREB-dependent manner. Also acts as a regulator of brain development: osteocalcin hormone crosses the blood-brain barrier and acts as a ligand for GPR158 on neurons, initiating a signaling response that prevents neuronal apoptosis in the hippocampus, favors the synthesis of all monoamine neurotransmitters and inhibits that of gamma-aminobutyric acid (GABA). Osteocalcin also crosses the placenta during pregnancy and maternal osteocalcin is required for fetal brain development. The sequence is that of Osteocalcin (BGLAP) from Bison priscus (Steppe wisent).